The primary structure comprises 340 residues: Alcohol dehydrogenase (340 aa).

Cys37, His58, Cys89, Cys92, Cys95, Cys103, and Cys145 together coordinate Zn(2+).

This sequence belongs to the zinc-containing alcohol dehydrogenase family. Zn(2+) serves as cofactor.

The enzyme catalyses a primary alcohol + NAD(+) = an aldehyde + NADH + H(+). The catalysed reaction is a secondary alcohol + NAD(+) = a ketone + NADH + H(+). This chain is Alcohol dehydrogenase (adh), found in Staphylococcus epidermidis (strain ATCC 12228 / FDA PCI 1200).